We begin with the raw amino-acid sequence, 318 residues long: Protein phosphatase 1 regulatory subunit 3C (318 aa).

The PP1-binding motif signature appears at 84–87 (RVVF). Residues 141–263 (PSADYLSFRN…YRIVHVQWKP (123 aa)) form an interaction with EPM2A region. In terms of domain architecture, CBM21 spans 149–257 (RNHFQKNSVC…NNEGQNYRIV (109 aa)).

In terms of assembly, interacts with PPP1CC catalytic subunit of PP1 and associates with glycogen. Forms complexes with glycogen phosphorylase, glycogen synthase and phosphorylase kinase which is necessary for its regulation of PP1 activity. Also interacts with EPM2A/laforin. In terms of processing, ubiquitinated by NHLRC1/malin in a EPM2A/laforin-dependent manner.

In terms of biological role, acts as a glycogen-targeting subunit for PP1 and regulates its activity. Activates glycogen synthase, reduces glycogen phosphorylase activity and limits glycogen breakdown. Dramatically increases basal and insulin-stimulated glycogen synthesis upon overexpression in a variety of cell types. The protein is Protein phosphatase 1 regulatory subunit 3C of Bos taurus (Bovine).